The chain runs to 300 residues: MNFEKIQYIERKTGEIKTEKVMGEGALKFLYYNPFGKLALHAVVKRKFLSDWYGRKMSKPESKEKIKSFVEEMEIDMSEYKRPIEDYASFNDFFYRELKDGARKIDYNENVIVSPADGKILAYQNIKEVDKFFVKGSKFTLEEFFNDKELAKKYEDGTFVIVRLAPADYHRFHFPVDGEISEIKKILGYYYSVSTHAIKTNFRIFCENKREYAILKTEKFGDIAMFDIGATMVGGIVQTYKTNSSVKKGEEKGYFLFGGSTCILVFEKNKVVIDKDIIENTQNKIETRIYMGEKFGNEKN.

Residues Asp117, His173, and Ser260 each act as charge relay system; for autoendoproteolytic cleavage activity in the active site. Ser260 acts as the Schiff-base intermediate with substrate; via pyruvic acid; for decarboxylase activity in catalysis. Ser260 carries the pyruvic acid (Ser); by autocatalysis modification.

Belongs to the phosphatidylserine decarboxylase family. PSD-B subfamily. Prokaryotic type II sub-subfamily. In terms of assembly, heterodimer of a large membrane-associated beta subunit and a small pyruvoyl-containing alpha subunit. Pyruvate serves as cofactor. Is synthesized initially as an inactive proenzyme. Formation of the active enzyme involves a self-maturation process in which the active site pyruvoyl group is generated from an internal serine residue via an autocatalytic post-translational modification. Two non-identical subunits are generated from the proenzyme in this reaction, and the pyruvate is formed at the N-terminus of the alpha chain, which is derived from the carboxyl end of the proenzyme. The autoendoproteolytic cleavage occurs by a canonical serine protease mechanism, in which the side chain hydroxyl group of the serine supplies its oxygen atom to form the C-terminus of the beta chain, while the remainder of the serine residue undergoes an oxidative deamination to produce ammonia and the pyruvoyl prosthetic group on the alpha chain. During this reaction, the Ser that is part of the protease active site of the proenzyme becomes the pyruvoyl prosthetic group, which constitutes an essential element of the active site of the mature decarboxylase.

The protein localises to the cell membrane. The catalysed reaction is a 1,2-diacyl-sn-glycero-3-phospho-L-serine + H(+) = a 1,2-diacyl-sn-glycero-3-phosphoethanolamine + CO2. Its pathway is phospholipid metabolism; phosphatidylethanolamine biosynthesis; phosphatidylethanolamine from CDP-diacylglycerol: step 2/2. Functionally, catalyzes the formation of phosphatidylethanolamine (PtdEtn) from phosphatidylserine (PtdSer). The sequence is that of Phosphatidylserine decarboxylase proenzyme from Fusobacterium nucleatum subsp. nucleatum (strain ATCC 25586 / DSM 15643 / BCRC 10681 / CIP 101130 / JCM 8532 / KCTC 2640 / LMG 13131 / VPI 4355).